Reading from the N-terminus, the 187-residue chain is dCTP deaminase, dUMP-forming (187 aa).

Residues 101–106 (KSSLGR), aspartate 119, 127–129 (TLE), glutamine 148, tyrosine 162, lysine 170, and glutamine 174 each bind dCTP. Glutamate 129 acts as the Proton donor/acceptor in catalysis.

It belongs to the dCTP deaminase family. As to quaternary structure, homotrimer.

The catalysed reaction is dCTP + 2 H2O = dUMP + NH4(+) + diphosphate. The protein operates within pyrimidine metabolism; dUMP biosynthesis; dUMP from dCTP: step 1/1. Functionally, bifunctional enzyme that catalyzes both the deamination of dCTP to dUTP and the hydrolysis of dUTP to dUMP without releasing the toxic dUTP intermediate. In Corynebacterium diphtheriae (strain ATCC 700971 / NCTC 13129 / Biotype gravis), this protein is dCTP deaminase, dUMP-forming.